A 339-amino-acid polypeptide reads, in one-letter code: DNA-directed RNA polymerase subunit alpha (339 aa).

Residues 1–235 are alpha N-terminal domain (alpha-NTD); it reads MTIQKNWQEL…DQLNVFVNFE (235 aa). The segment at 251–339 is alpha C-terminal domain (alpha-CTD); it reads FNPAFLKKVD…ELAKRFEDHY (89 aa).

Belongs to the RNA polymerase alpha chain family. In terms of assembly, homodimer. The RNAP catalytic core consists of 2 alpha, 1 beta, 1 beta' and 1 omega subunit. When a sigma factor is associated with the core the holoenzyme is formed, which can initiate transcription.

It catalyses the reaction RNA(n) + a ribonucleoside 5'-triphosphate = RNA(n+1) + diphosphate. DNA-dependent RNA polymerase catalyzes the transcription of DNA into RNA using the four ribonucleoside triphosphates as substrates. This Rhodopseudomonas palustris (strain ATCC BAA-98 / CGA009) protein is DNA-directed RNA polymerase subunit alpha.